The primary structure comprises 194 residues: ATP-dependent Clp protease proteolytic subunit (194 aa).

The active-site Nucleophile is the Ser98. His123 is an active-site residue.

This sequence belongs to the peptidase S14 family. Fourteen ClpP subunits assemble into 2 heptameric rings which stack back to back to give a disk-like structure with a central cavity, resembling the structure of eukaryotic proteasomes.

It is found in the cytoplasm. It carries out the reaction Hydrolysis of proteins to small peptides in the presence of ATP and magnesium. alpha-casein is the usual test substrate. In the absence of ATP, only oligopeptides shorter than five residues are hydrolyzed (such as succinyl-Leu-Tyr-|-NHMec, and Leu-Tyr-Leu-|-Tyr-Trp, in which cleavage of the -Tyr-|-Leu- and -Tyr-|-Trp bonds also occurs).. Its function is as follows. Cleaves peptides in various proteins in a process that requires ATP hydrolysis. Has a chymotrypsin-like activity. Plays a major role in the degradation of misfolded proteins. The protein is ATP-dependent Clp protease proteolytic subunit of Staphylococcus saprophyticus subsp. saprophyticus (strain ATCC 15305 / DSM 20229 / NCIMB 8711 / NCTC 7292 / S-41).